Here is a 305-residue protein sequence, read N- to C-terminus: tRNA dimethylallyltransferase 1 (305 aa).

10–17 (GPTASGKS) is an ATP binding site. 12-17 (TASGKS) contributes to the substrate binding site. Residues 35–38 (DSLT) are interaction with substrate tRNA.

This sequence belongs to the IPP transferase family. As to quaternary structure, monomer. Mg(2+) serves as cofactor.

The enzyme catalyses adenosine(37) in tRNA + dimethylallyl diphosphate = N(6)-dimethylallyladenosine(37) in tRNA + diphosphate. Functionally, catalyzes the transfer of a dimethylallyl group onto the adenine at position 37 in tRNAs that read codons beginning with uridine, leading to the formation of N6-(dimethylallyl)adenosine (i(6)A). The chain is tRNA dimethylallyltransferase 1 from Trichlorobacter lovleyi (strain ATCC BAA-1151 / DSM 17278 / SZ) (Geobacter lovleyi).